The primary structure comprises 461 residues: Cyclic 2,3-diphosphoglycerate synthetase (461 aa).

The protein belongs to the cyclic 2,3-diphosphoglycerate synthetase family.

The protein resides in the cytoplasm. It carries out the reaction (2R)-2,3-bisphosphoglycerate + ATP + H(+) = cyclic (2R)-2,3-bisphosphoglycerate + ADP + phosphate. Functionally, catalyzes the formation of cyclic 2,3-diphosphoglycerate (cDPG) by formation of an intramolecular phosphoanhydride bond at the expense of ATP. This Methanosphaera stadtmanae (strain ATCC 43021 / DSM 3091 / JCM 11832 / MCB-3) protein is Cyclic 2,3-diphosphoglycerate synthetase.